The sequence spans 275 residues: MPIVKTKPTSAGRRHVVKLYNPDLHKGRPYEPLVETKSKSGGRNNVGRITTRHIGGGHKQHYRVIDFKRTKDGIPAVIERLEYDPNRSAHIALVKYADGERRYIIAPKGMKAGDPVRSGVDAPIKVGSTLPLRNIPVGSVIHCVELKPGKGAQLARSAGASVQLVAREGAYATIRLRSGEMRKVLVDCRATLGEVSNSEHSLKQLGKAGASRWRGKRPTVRGVAMNPVDHPHGGGEGRTSGGRHPVTPWGVPTKGHKTRKNKRTDKMIVRRRSAK.

A compositionally biased stretch (basic and acidic residues) spans 28-38 (RPYEPLVETKS). Disordered stretches follow at residues 28-53 (RPYEPLVETKSKSGGRNNVGRITTRH) and 222-275 (GVAM…RSAK). The span at 254-275 (KGHKTRKNKRTDKMIVRRRSAK) shows a compositional bias: basic residues.

This sequence belongs to the universal ribosomal protein uL2 family. Part of the 50S ribosomal subunit. Forms a bridge to the 30S subunit in the 70S ribosome.

Its function is as follows. One of the primary rRNA binding proteins. Required for association of the 30S and 50S subunits to form the 70S ribosome, for tRNA binding and peptide bond formation. It has been suggested to have peptidyltransferase activity; this is somewhat controversial. Makes several contacts with the 16S rRNA in the 70S ribosome. This is Large ribosomal subunit protein uL2 from Marinobacter nauticus (strain ATCC 700491 / DSM 11845 / VT8) (Marinobacter aquaeolei).